An 830-amino-acid chain; its full sequence is Vacuolar protein sorting-associated protein 11 homolog (830 aa).

The segment at 733–775 adopts an RING-type; atypical zinc-finger fold; that stretch reads CDICREMLSMQSIYFLCQHSFHEECLNYKSTKRQEKFLCIICK.

This sequence belongs to the VPS11 family. As to quaternary structure, part of the homotypic fusion and vacuole protein sorting (HOPS) complex, composed of Vps16A, car/Vps33A, dor/Vps18, Vps39, Vps11 and lt/Vps41. Unlike in other species, not part of the class C core vacuole/endosome tethering (CORVET) complex.

It is found in the late endosome membrane. The protein resides in the lysosome membrane. In terms of biological role, part of the homotypic fusion and vacuole protein sorting (HOPS) tethering complex involved in endo-lysosomal vesicle trafficking and lysosome biogenesis, but unlike in many other species does not form part of the class C core vacuole/endosome tethering (CORVET) complex. The HOPS complex facilitates docking and fusion of lysosomes with late endosomes and several other types of vesicles. The HOPS complex is also involved in autophagy, pigment granule biogenesis and crinophagy (the elimination of unused secretory granules through fusion with lysosomes). The HOPS complex probably instigates autophagosome-lysosome fusion by binding autophagosome-associated Syx17/syntaxin 17 and promoting assembly of the trans-SNARE complex. Independent of Syx17/syntaxin 17, HOPS is involved in biosynthetic transport to lysosomes and lysosome-related organelles such as eye-pigment granules. Required for autophagocytosis-dependent remodeling of myofibrils and transverse-tubules (T-tubules) during metamorphosis. In Drosophila melanogaster (Fruit fly), this protein is Vacuolar protein sorting-associated protein 11 homolog.